The sequence spans 397 residues: CCA-adding enzyme (397 aa).

Positions 26 and 29 each coordinate ATP. Residues G26 and R29 each coordinate CTP. Mg(2+) is bound by residues D39 and D41. The ATP site is built by R110, D153, R156, R159, and R162. The CTP site is built by R110, D153, R156, R159, and R162.

The protein belongs to the tRNA nucleotidyltransferase/poly(A) polymerase family. Bacterial CCA-adding enzyme type 3 subfamily. As to quaternary structure, homodimer. Mg(2+) serves as cofactor.

The catalysed reaction is a tRNA precursor + 2 CTP + ATP = a tRNA with a 3' CCA end + 3 diphosphate. It catalyses the reaction a tRNA with a 3' CCA end + 2 CTP + ATP = a tRNA with a 3' CCACCA end + 3 diphosphate. In terms of biological role, catalyzes the addition and repair of the essential 3'-terminal CCA sequence in tRNAs without using a nucleic acid template. Adds these three nucleotides in the order of C, C, and A to the tRNA nucleotide-73, using CTP and ATP as substrates and producing inorganic pyrophosphate. tRNA 3'-terminal CCA addition is required both for tRNA processing and repair. Also involved in tRNA surveillance by mediating tandem CCA addition to generate a CCACCA at the 3' terminus of unstable tRNAs. While stable tRNAs receive only 3'-terminal CCA, unstable tRNAs are marked with CCACCA and rapidly degraded. In Bacillus cereus (strain ATCC 10987 / NRS 248), this protein is CCA-adding enzyme.